The sequence spans 128 residues: MKLHLLKSKIHNAIVTSGDLEYEGSITVDSELLKKADMIPNEKVLVVNNNNGERFETYIIKGDHGSRVIQLNGAAARCALPGDEIIIMTFCEIEAEEAPDFKPMVLIVDKNNNPKRRHRIGEEDEQLG.

Residue Ser-25 is the Schiff-base intermediate with substrate; via pyruvic acid of the active site. Pyruvic acid (Ser) is present on Ser-25. A substrate-binding site is contributed by Thr-57. The active-site Proton donor is Tyr-58. 73–75 (GAA) is a substrate binding site.

This sequence belongs to the PanD family. In terms of assembly, heterooctamer of four alpha and four beta subunits. Requires pyruvate as cofactor. Is synthesized initially as an inactive proenzyme, which is activated by self-cleavage at a specific serine bond to produce a beta-subunit with a hydroxyl group at its C-terminus and an alpha-subunit with a pyruvoyl group at its N-terminus.

It is found in the cytoplasm. It catalyses the reaction L-aspartate + H(+) = beta-alanine + CO2. It functions in the pathway cofactor biosynthesis; (R)-pantothenate biosynthesis; beta-alanine from L-aspartate: step 1/1. In terms of biological role, catalyzes the pyruvoyl-dependent decarboxylation of aspartate to produce beta-alanine. The protein is Aspartate 1-decarboxylase of Chlorobium phaeovibrioides (strain DSM 265 / 1930) (Prosthecochloris vibrioformis (strain DSM 265)).